The chain runs to 504 residues: PE-PGRS family protein PE_PGRS62 (504 aa).

Positions 4-94 (VVTVPEAVAA…AAYLNTESAN (91 aa)) constitute a PE domain.

The protein belongs to the mycobacterial PE family. PGRS subfamily. In terms of assembly, interacts with host Toll-like receptor 2 (TLR2).

The protein resides in the secreted. It is found in the cell wall. Supports mycobacterial virulence via inhibition of phagosome maturation and host inducible nitric oxide synthase (iNOS) expression. May promote the survival within macrophages by disturbing the cytokines profiles and blocking the endoplasmic reticulum (ER) stress-mediated apoptosis. May also affect bacterial cell wall composition. Functionally, expression in Mycobacterium smegmatis, a nonpathogenic species naturally deficient in PE_PGRS genes, results in enhanced resistance to various in vitro stresses. It also leads to phagosome maturation arrest and increased survival in macrophages. The polypeptide is PE-PGRS family protein PE_PGRS62 (Mycobacterium tuberculosis (strain ATCC 25618 / H37Rv)).